The primary structure comprises 159 residues: Large ribosomal subunit protein uL10 (159 aa).

It belongs to the universal ribosomal protein uL10 family. Part of the ribosomal stalk of the 50S ribosomal subunit. The N-terminus interacts with L11 and the large rRNA to form the base of the stalk. The C-terminus forms an elongated spine to which L12 dimers bind in a sequential fashion forming a multimeric L10(L12)X complex.

Its function is as follows. Forms part of the ribosomal stalk, playing a central role in the interaction of the ribosome with GTP-bound translation factors. This Campylobacter lari (strain RM2100 / D67 / ATCC BAA-1060) protein is Large ribosomal subunit protein uL10.